Consider the following 95-residue polypeptide: Protein TusB (95 aa).

Belongs to the DsrH/TusB family. As to quaternary structure, heterohexamer, formed by a dimer of trimers. The hexameric TusBCD complex contains 2 copies each of TusB, TusC and TusD. The TusBCD complex interacts with TusE.

It localises to the cytoplasm. In terms of biological role, part of a sulfur-relay system required for 2-thiolation of 5-methylaminomethyl-2-thiouridine (mnm(5)s(2)U) at tRNA wobble positions. This Cronobacter sakazakii (strain ATCC BAA-894) (Enterobacter sakazakii) protein is Protein TusB.